Consider the following 236-residue polypeptide: Lipoarabinomannan carrier protein LprG (236 aa).

The first 26 residues, 1-26, serve as a signal peptide directing secretion; the sequence is MRTPRRHCRRIAVLAAVSIAATVVAG. Cysteine 27 carries N-palmitoyl cysteine lipidation. Cysteine 27 carries S-diacylglycerol cysteine lipidation.

Belongs to the LppX/LprAFG lipoprotein family. Post-translationally, modified by Lgt on Cys-27 with an S-linked diacylglyceral, signal peptide is removed by LspA, Cys-27 is further modifed with a fatty acid on its amino group by Lnt yielding a triacylated protein.

The protein resides in the cell inner membrane. It is found in the secreted. Its subcellular location is the cell wall. Its function is as follows. Helps membrane protein Mb1445c (P55) transport triacylglycerides (TAG) across the inner cell membrane into the periplasm and probably ultimately to the outer membrane. Binds TAG in its hydrophobic cavity and transfers it between lipid bilayers. TAG probably regulates lipid metabolism and growth regulation and plays a structural role in the outer membrane. Binds di- and triacylated phosphatidyl-myo-inositol mannosides (PIMs), and glycolipid lipoglycan modulins lipoarabinomannan (LAM) and lipomannan (LM), facilitating their recognition by TLR2. Required for activity of drug efflux transporter Mb1445c. Required, probably with Mb1445c, for normal surface localization of LAM. Functionally, constitutes a host TLR2 agonist (toll-like receptor). The sequence is that of Lipoarabinomannan carrier protein LprG from Mycobacterium bovis (strain ATCC BAA-935 / AF2122/97).